A 106-amino-acid chain; its full sequence is Thioredoxin-like protein YusE (106 aa).

In terms of domain architecture, Thioredoxin spans 1–101 (MKELQEHELD…LYELIKQKSS (101 aa)). The cysteines at positions 26 and 29 are disulfide-linked.

This is Thioredoxin-like protein YusE (yusE) from Bacillus subtilis (strain 168).